Here is a 90-residue protein sequence, read N- to C-terminus: Putative transcript Y 12 protein (90 aa).

The sequence is that of Putative transcript Y 12 protein (TTTY12) from Homo sapiens (Human).